The following is a 219-amino-acid chain: Probable octanoyltransferase (219 aa).

A BPL/LPL catalytic domain is found at 43–219 (QPPKPTIITS…NNLDSFLMSK (177 aa)). Residues 83-90 (RGGQTTFH), 151-153 (AIG), and 164-166 (GLA) contribute to the substrate site. The Acyl-thioester intermediate role is filled by Cys-182.

It belongs to the LipB family.

It catalyses the reaction octanoyl-[ACP] + L-lysyl-[protein] = N(6)-octanoyl-L-lysyl-[protein] + holo-[ACP] + H(+). The protein operates within protein modification; protein lipoylation via endogenous pathway; protein N(6)-(lipoyl)lysine from octanoyl-[acyl-carrier-protein]: step 1/2. Its function is as follows. Catalyzes the transfer of endogenously produced octanoic acid from octanoyl-acyl-carrier-protein onto the lipoyl domains of lipoate-dependent enzymes. Lipoyl-ACP can also act as a substrate although octanoyl-ACP is likely to be the physiological substrate. In Schizosaccharomyces pombe (strain 972 / ATCC 24843) (Fission yeast), this protein is Probable octanoyltransferase.